Here is a 194-residue protein sequence, read N- to C-terminus: Imidazoleglycerol-phosphate dehydratase (194 aa).

Belongs to the imidazoleglycerol-phosphate dehydratase family.

It is found in the cytoplasm. The enzyme catalyses D-erythro-1-(imidazol-4-yl)glycerol 3-phosphate = 3-(imidazol-4-yl)-2-oxopropyl phosphate + H2O. Its pathway is amino-acid biosynthesis; L-histidine biosynthesis; L-histidine from 5-phospho-alpha-D-ribose 1-diphosphate: step 6/9. This chain is Imidazoleglycerol-phosphate dehydratase, found in Streptococcus thermophilus (strain ATCC BAA-491 / LMD-9).